Reading from the N-terminus, the 423-residue chain is WD repeat and SOCS box-containing protein 1 (423 aa).

Residues 76-100 (DRSSGAGPRRLSRQNSEGSLLPGEP) form a disordered region. 5 WD repeats span residues 125 to 166 (SRCV…LLLN), 169 to 209 (DHTD…NMVK), 213 to 252 (GHQN…LIRK), 255 to 294 (GHHN…VLLE), and 310 to 347 (ANDR…KSPQ). Residues 373–423 (DGSVHFWASPRSIASLQHLCRMTLRRVMPTQQVYTLPIPFSMQDYLAYKTL) enclose the SOCS box domain.

In terms of assembly, component of a probable ECS E3 ubiquitin-protein ligase complex that contains the Elongin BC complex.

It functions in the pathway protein modification; protein ubiquitination. Its function is as follows. Probable substrate-recognition component of a SCF-like ECS (Elongin-Cullin-SOCS-box protein) E3 ubiquitin-protein ligase complex which mediates the ubiquitination and subsequent proteasomal degradation of target proteins. In Danio rerio (Zebrafish), this protein is WD repeat and SOCS box-containing protein 1 (wsb1).